Consider the following 233-residue polypeptide: Zinc import ATP-binding protein ZnuC (233 aa).

The ABC transporter domain maps to 6 to 222; it reads IEFRNVSKKF…SEFSNALSAL (217 aa). Residue 38–45 participates in ATP binding; sequence GPNGAGKT.

The protein belongs to the ABC transporter superfamily. Zinc importer (TC 3.A.1.15.5) family. As to quaternary structure, the complex is composed of two ATP-binding proteins (ZnuC), two transmembrane proteins (ZnuB) and a solute-binding protein (ZnuA).

It is found in the cell inner membrane. It catalyses the reaction Zn(2+)(out) + ATP(in) + H2O(in) = Zn(2+)(in) + ADP(in) + phosphate(in) + H(+)(in). Its function is as follows. Part of the ABC transporter complex ZnuABC involved in zinc import. Responsible for energy coupling to the transport system. This chain is Zinc import ATP-binding protein ZnuC, found in Rickettsia conorii (strain ATCC VR-613 / Malish 7).